A 389-amino-acid polypeptide reads, in one-letter code: LL-diaminopimelate aminotransferase (389 aa).

The substrate site is built by tyrosine 13 and glycine 38. Residues tyrosine 67, 101-102, tyrosine 126, asparagine 176, tyrosine 207, and 235-237 each bind pyridoxal 5'-phosphate; these read SK and SLS. Positions 102, 126, and 176 each coordinate substrate. At lysine 238 the chain carries N6-(pyridoxal phosphate)lysine. A pyridoxal 5'-phosphate-binding site is contributed by arginine 246. Arginine 364 provides a ligand contact to substrate.

Belongs to the class-I pyridoxal-phosphate-dependent aminotransferase family. LL-diaminopimelate aminotransferase subfamily. Homodimer. Requires pyridoxal 5'-phosphate as cofactor.

The catalysed reaction is (2S,6S)-2,6-diaminopimelate + 2-oxoglutarate = (S)-2,3,4,5-tetrahydrodipicolinate + L-glutamate + H2O + H(+). Its pathway is amino-acid biosynthesis; L-lysine biosynthesis via DAP pathway; LL-2,6-diaminopimelate from (S)-tetrahydrodipicolinate (aminotransferase route): step 1/1. Its function is as follows. Involved in the synthesis of meso-diaminopimelate (m-DAP or DL-DAP), required for both lysine and peptidoglycan biosynthesis. Catalyzes the direct conversion of tetrahydrodipicolinate to LL-diaminopimelate. The chain is LL-diaminopimelate aminotransferase from Halothermothrix orenii (strain H 168 / OCM 544 / DSM 9562).